A 371-amino-acid chain; its full sequence is 2-aminoethylphosphonate--pyruvate transaminase (371 aa).

K195 is subject to N6-(pyridoxal phosphate)lysine.

It belongs to the class-V pyridoxal-phosphate-dependent aminotransferase family. PhnW subfamily. Homodimer. The cofactor is pyridoxal 5'-phosphate.

It carries out the reaction (2-aminoethyl)phosphonate + pyruvate = phosphonoacetaldehyde + L-alanine. Its function is as follows. Involved in phosphonate degradation. The chain is 2-aminoethylphosphonate--pyruvate transaminase from Pseudomonas aeruginosa (strain UCBPP-PA14).